We begin with the raw amino-acid sequence, 147 residues long: Hemoglobin subunit gamma (147 aa).

Residues 3 to 147 enclose the Globin domain; that stretch reads HFTAEEKAII…VATALAHKYH (145 aa). Histidine 64 and histidine 93 together coordinate heme b.

It belongs to the globin family. In terms of assembly, heterotetramer of two alpha chains and two gamma chains in fetal hemoglobin (Hb F). Red blood cells.

Its function is as follows. Gamma chains make up the fetal hemoglobin F, in combination with alpha chains. This Otolemur crassicaudatus (Brown greater galago) protein is Hemoglobin subunit gamma (HBG).